Consider the following 107-residue polypeptide: Phosphoribosyl-ATP pyrophosphatase (107 aa).

The protein belongs to the PRA-PH family.

The protein resides in the cytoplasm. The enzyme catalyses 1-(5-phospho-beta-D-ribosyl)-ATP + H2O = 1-(5-phospho-beta-D-ribosyl)-5'-AMP + diphosphate + H(+). It participates in amino-acid biosynthesis; L-histidine biosynthesis; L-histidine from 5-phospho-alpha-D-ribose 1-diphosphate: step 2/9. This Bacillus anthracis (strain A0248) protein is Phosphoribosyl-ATP pyrophosphatase.